The primary structure comprises 156 residues: Pheromone-binding protein Gp-9 (156 aa).

The N-terminal stretch at 1-19 (MKTFVFHIFIFALVAFASA) is a signal peptide. 3 disulfide bridges follow: cysteine 37/cysteine 77, cysteine 73/cysteine 129, and cysteine 118/cysteine 138.

It belongs to the PBP/GOBP family. Homodimer.

It is found in the secreted. Colony queen number, a major feature of social organization, is associated with worker genotype for Gp-9. Colonies are headed by either a single reproductive queen (monogyne form) or multiple queens (polygyne form). Differences in worker Gp-9 genotypes between social forms may cause differences in workers' abilities to recognize queens and regulate their numbers. In Solenopsis globularia littoralis (Fire ant), this protein is Pheromone-binding protein Gp-9.